The following is a 155-amino-acid chain: 6,7-dimethyl-8-ribityllumazine synthase (155 aa).

Residues phenylalanine 24, 58-60 (AFE), and 82-84 (VLI) each bind 5-amino-6-(D-ribitylamino)uracil. Position 87 to 88 (87 to 88 (AT)) interacts with (2S)-2-hydroxy-3-oxobutyl phosphate. The active-site Proton donor is histidine 90. Phenylalanine 115 contacts 5-amino-6-(D-ribitylamino)uracil. Arginine 129 lines the (2S)-2-hydroxy-3-oxobutyl phosphate pocket.

The protein belongs to the DMRL synthase family.

The catalysed reaction is (2S)-2-hydroxy-3-oxobutyl phosphate + 5-amino-6-(D-ribitylamino)uracil = 6,7-dimethyl-8-(1-D-ribityl)lumazine + phosphate + 2 H2O + H(+). Its pathway is cofactor biosynthesis; riboflavin biosynthesis; riboflavin from 2-hydroxy-3-oxobutyl phosphate and 5-amino-6-(D-ribitylamino)uracil: step 1/2. Functionally, catalyzes the formation of 6,7-dimethyl-8-ribityllumazine by condensation of 5-amino-6-(D-ribitylamino)uracil with 3,4-dihydroxy-2-butanone 4-phosphate. This is the penultimate step in the biosynthesis of riboflavin. This is 6,7-dimethyl-8-ribityllumazine synthase from Chloroherpeton thalassium (strain ATCC 35110 / GB-78).